Consider the following 533-residue polypeptide: MASSNRHWPSMFRSKHATQPWQTQPDMAGSPPSLLSGSSAGSAGGGGYSLKSSPFSSVGEERVPDPKPRWNPRPEQIRILEAIFNSGMVNPPRDEIPRIRMQLQEYGQVGDANVFYWFQNRKSRSKNKLRSGGTGRAGLGLGGNRASAPAAAHREAVAPSFTPPPPILPAPQPVQPQQQLVSPVAAPTSSSSSSSDRSSGSSKPARATSTQAMSVTTAMDLLSPLAAACHQQMLYQGQPLESPPAPAPKVHGIVPHDEPVFLQWPQSPCLSAVDLGAAILGGQYMHLPVPAPQPPSSPGAAGMFWGLCNDVQAPNNTGHKSCAWSAGLGQHWCGSADQLGLGKSSAASIATVSRPEEAHDVDATKHGLLQYGFGITTPQVHVDVTSSAAGVLPPVPSSPSPPNAAVTVASVAATASLTDFAASAISAGAVANNQFQGLADFGLVAGACSGAGAAAAAAAPEAGSSVAAVVCVSVAGAAPPLFYPAAHFNVRHYGDEAELLRYRGGSRTEPVPVDESGVTVEPLQQGAVYIVVM.

Disordered regions lie at residues 1–74 (MASS…NPRP) and 125–212 (SKNK…STQA). The segment covering 28-41 (AGSPPSLLSGSSAG) has biased composition (low complexity). The segment covering 59-68 (GEERVPDPKP) has biased composition (basic and acidic residues). The segment at residues 65 to 129 (DPKPRWNPRP…NRKSRSKNKL (65 aa)) is a DNA-binding region (homeobox; WUS-type). Over residues 132-143 (GGTGRAGLGLGG) the composition is skewed to gly residues. The span at 161-174 (FTPPPPILPAPQPV) shows a compositional bias: pro residues. A compositionally biased stretch (low complexity) spans 175–202 (QPQQQLVSPVAAPTSSSSSSSDRSSGSS).

This sequence belongs to the WUS homeobox family.

Its subcellular location is the nucleus. Its function is as follows. Transcription factor which may be involved in developmental processes. This chain is WUSCHEL-related homeobox 7 (WOX7), found in Oryza sativa subsp. japonica (Rice).